The following is a 272-amino-acid chain: Phytolongin Phyl2.2 (272 aa).

In terms of domain architecture, Longin spans 12-116 (CIAKGTVVLA…LINPVSHCLQ (105 aa)). A helical; Anchor for type IV membrane protein membrane pass occupies residues 243–263 (WVVLMFDFCICAVLFGIWLWI).

It belongs to the synaptobrevin family.

Its subcellular location is the membrane. In terms of biological role, non-SNARE longin protein involved in membrane-trafficking machinery. This Arabidopsis thaliana (Mouse-ear cress) protein is Phytolongin Phyl2.2.